Here is a 142-residue protein sequence, read N- to C-terminus: Large ribosomal subunit protein uL13 (142 aa).

This sequence belongs to the universal ribosomal protein uL13 family. As to quaternary structure, part of the 50S ribosomal subunit.

Functionally, this protein is one of the early assembly proteins of the 50S ribosomal subunit, although it is not seen to bind rRNA by itself. It is important during the early stages of 50S assembly. In Burkholderia pseudomallei (strain 1106a), this protein is Large ribosomal subunit protein uL13.